Reading from the N-terminus, the 277-residue chain is Phosphoenolpyruvate synthase regulatory protein (277 aa).

An ADP-binding site is contributed by 157–164 (GVSRCGKT).

This sequence belongs to the pyruvate, phosphate/water dikinase regulatory protein family. PSRP subfamily.

The catalysed reaction is [pyruvate, water dikinase] + ADP = [pyruvate, water dikinase]-phosphate + AMP + H(+). It catalyses the reaction [pyruvate, water dikinase]-phosphate + phosphate + H(+) = [pyruvate, water dikinase] + diphosphate. Functionally, bifunctional serine/threonine kinase and phosphorylase involved in the regulation of the phosphoenolpyruvate synthase (PEPS) by catalyzing its phosphorylation/dephosphorylation. This chain is Phosphoenolpyruvate synthase regulatory protein, found in Escherichia fergusonii (strain ATCC 35469 / DSM 13698 / CCUG 18766 / IAM 14443 / JCM 21226 / LMG 7866 / NBRC 102419 / NCTC 12128 / CDC 0568-73).